The primary structure comprises 1076 residues: DNA-directed RNA polymerase subunit beta (1076 aa).

Belongs to the RNA polymerase beta chain family. In terms of assembly, in plastids the minimal PEP RNA polymerase catalytic core is composed of four subunits: alpha, beta, beta', and beta''. When a (nuclear-encoded) sigma factor is associated with the core the holoenzyme is formed, which can initiate transcription.

The protein localises to the plastid. It is found in the chloroplast. The catalysed reaction is RNA(n) + a ribonucleoside 5'-triphosphate = RNA(n+1) + diphosphate. In terms of biological role, DNA-dependent RNA polymerase catalyzes the transcription of DNA into RNA using the four ribonucleoside triphosphates as substrates. This is DNA-directed RNA polymerase subunit beta from Lolium perenne (Perennial ryegrass).